Consider the following 474-residue polypeptide: uncharacterized protein (474 aa).

Residues 374–398 (GLICYLALFSISLMIENIIGLTISL) form a helical membrane-spanning segment.

It localises to the membrane. This is an uncharacterized protein from Borreliella burgdorferi (strain ATCC 35210 / DSM 4680 / CIP 102532 / B31) (Borrelia burgdorferi).